Consider the following 292-residue polypeptide: Cyclic dipurine nucleotide synthase (292 aa).

An ATP-binding site is contributed by Gln47. 48 to 52 (GSYRN) provides a ligand contact to GTP. The Mg(2+) site is built by Asp61 and Asp63. Residues Asp63, 121-122 (NK), and Asp136 each bind ATP. Asp136 provides a ligand contact to Mg(2+). The GTP site is built by Lys197 and Ser216.

Belongs to the CD-NTase family. E01 subfamily. It depends on Mg(2+) as a cofactor.

The enzyme catalyses 2 ATP = 3',3'-c-di-AMP + 2 diphosphate. The catalysed reaction is 2 GTP = 3',3'-c-di-GMP + 2 diphosphate. It catalyses the reaction GTP + ATP = 3',3'-cGAMP + 2 diphosphate. Cyclic nucleotide synthase (second messenger synthase) of a CBASS antivirus system. CBASS (cyclic oligonucleotide-based antiphage signaling system) provides immunity against bacteriophage. The CD-NTase protein synthesizes cyclic nucleotides in response to infection; these serve as specific second messenger signals. The signals activate a diverse range of effectors, leading to bacterial cell death and thus abortive phage infection. A type I-A(GA) CBASS system. Its function is as follows. Cyclic dinucleotide synthase that catalyzes the synthesis of 3'3'-cyclic GMP-AMP (cGAMP) from GTP and ATP, and of c-di-AMP and c-di-GMP, that are second messengers for cell signal transduction. This Elizabethkingia meningoseptica (Chryseobacterium meningosepticum) protein is Cyclic dipurine nucleotide synthase.